The following is a 988-amino-acid chain: Bifunctional glutamine synthetase adenylyltransferase/adenylyl-removing enzyme (988 aa).

The segment at 1-472 is adenylyl removase; the sequence is MTKRETVERR…RYSALFEQET (472 aa). The adenylyl transferase stretch occupies residues 476–988; that stretch reads GEAGNLVFTG…AFVAVVKNGG (513 aa).

The protein belongs to the GlnE family. The cofactor is Mg(2+).

It catalyses the reaction [glutamine synthetase]-O(4)-(5'-adenylyl)-L-tyrosine + phosphate = [glutamine synthetase]-L-tyrosine + ADP. It carries out the reaction [glutamine synthetase]-L-tyrosine + ATP = [glutamine synthetase]-O(4)-(5'-adenylyl)-L-tyrosine + diphosphate. Its function is as follows. Involved in the regulation of glutamine synthetase GlnA, a key enzyme in the process to assimilate ammonia. When cellular nitrogen levels are high, the C-terminal adenylyl transferase (AT) inactivates GlnA by covalent transfer of an adenylyl group from ATP to specific tyrosine residue of GlnA, thus reducing its activity. Conversely, when nitrogen levels are low, the N-terminal adenylyl removase (AR) activates GlnA by removing the adenylyl group by phosphorolysis, increasing its activity. The regulatory region of GlnE binds the signal transduction protein PII (GlnB) which indicates the nitrogen status of the cell. The sequence is that of Bifunctional glutamine synthetase adenylyltransferase/adenylyl-removing enzyme from Agrobacterium fabrum (strain C58 / ATCC 33970) (Agrobacterium tumefaciens (strain C58)).